The chain runs to 538 residues: Chaperonin GroEL 1 (538 aa).

Residues 29 to 32, 86 to 90, G413, 478 to 480, and D494 contribute to the ATP site; these read TLGP, DGTTT, and NAA.

It belongs to the chaperonin (HSP60) family. In terms of assembly, forms a cylinder of 14 subunits composed of two heptameric rings stacked back-to-back. Interacts with the co-chaperonin GroES.

The protein resides in the cytoplasm. It carries out the reaction ATP + H2O + a folded polypeptide = ADP + phosphate + an unfolded polypeptide.. Its function is as follows. Together with its co-chaperonin GroES, plays an essential role in assisting protein folding. The GroEL-GroES system forms a nano-cage that allows encapsulation of the non-native substrate proteins and provides a physical environment optimized to promote and accelerate protein folding. The chain is Chaperonin GroEL 1 from Corynebacterium glutamicum (strain R).